The following is a 398-amino-acid chain: CCA-adding enzyme (398 aa).

Residues G32 and R35 each contribute to the ATP site. Positions 32 and 35 each coordinate CTP. Mg(2+) contacts are provided by D45 and D47. The ATP site is built by R116, D159, R162, R165, and R168. Residues R116, D159, R162, R165, and R168 each contribute to the CTP site.

The protein belongs to the tRNA nucleotidyltransferase/poly(A) polymerase family. Bacterial CCA-adding enzyme type 3 subfamily. As to quaternary structure, homodimer. Requires Mg(2+) as cofactor.

The enzyme catalyses a tRNA precursor + 2 CTP + ATP = a tRNA with a 3' CCA end + 3 diphosphate. It carries out the reaction a tRNA with a 3' CCA end + 2 CTP + ATP = a tRNA with a 3' CCACCA end + 3 diphosphate. Functionally, catalyzes the addition and repair of the essential 3'-terminal CCA sequence in tRNAs without using a nucleic acid template. Adds these three nucleotides in the order of C, C, and A to the tRNA nucleotide-73, using CTP and ATP as substrates and producing inorganic pyrophosphate. tRNA 3'-terminal CCA addition is required both for tRNA processing and repair. Also involved in tRNA surveillance by mediating tandem CCA addition to generate a CCACCA at the 3' terminus of unstable tRNAs. While stable tRNAs receive only 3'-terminal CCA, unstable tRNAs are marked with CCACCA and rapidly degraded. The chain is CCA-adding enzyme from Lactobacillus gasseri (strain ATCC 33323 / DSM 20243 / BCRC 14619 / CIP 102991 / JCM 1131 / KCTC 3163 / NCIMB 11718 / NCTC 13722 / AM63).